The primary structure comprises 368 residues: Galactoside 2-alpha-L-fucosyltransferase SEC1 (368 aa).

The segment at 1–20 (MWDMRAVAPQRPAAGHPRAG) is disordered. Topologically, residues 1 to 31 (MWDMRAVAPQRPAAGHPRAGWPRKLKTAATR) are cytoplasmic. A helical transmembrane segment spans residues 32-52 (FWATCPSSSTVCFLFVIFAVS). Topologically, residues 53 to 368 (TVFHCHRRLA…NLGQARESHP (316 aa)) are lumenal.

This sequence belongs to the glycosyltransferase 11 family. As to expression, kidney.

The protein resides in the golgi apparatus. It localises to the golgi stack membrane. It catalyses the reaction a ganglioside GM1 + GDP-beta-L-fucose = a ganglioside Fuc-GM1 + GDP + H(+). It functions in the pathway protein modification; protein glycosylation. Its function is as follows. Catalyzes the transfer of alpha 1,2-linked fucose to ganglioside GM1 and galacto-N-biose. The polypeptide is Galactoside 2-alpha-L-fucosyltransferase SEC1 (Bos taurus (Bovine)).